The sequence spans 367 residues: Germination protease (367 aa).

The propeptide occupies 1–15; that stretch reads MKEPLDLSKYSIRTD.

Belongs to the peptidase A25 family. As to quaternary structure, homotetramer. In terms of processing, autoproteolytically processed. The inactive tetrameric zymogen termed p46 autoprocesses to a smaller form termed p41, which is active only during spore germination.

The catalysed reaction is Endopeptidase action with P4 Glu or Asp, P1 preferably Glu &gt; Asp, P1' hydrophobic and P2' Ala.. Its function is as follows. Initiates the rapid degradation of small, acid-soluble proteins during spore germination. The chain is Germination protease from Bacillus cereus (strain B4264).